Reading from the N-terminus, the 179-residue chain is Large ribosomal subunit protein uL5 (179 aa).

This sequence belongs to the universal ribosomal protein uL5 family. Part of the 50S ribosomal subunit; part of the 5S rRNA/L5/L18/L25 subcomplex. Contacts the 5S rRNA and the P site tRNA. Forms a bridge to the 30S subunit in the 70S ribosome.

In terms of biological role, this is one of the proteins that bind and probably mediate the attachment of the 5S RNA into the large ribosomal subunit, where it forms part of the central protuberance. In the 70S ribosome it contacts protein S13 of the 30S subunit (bridge B1b), connecting the 2 subunits; this bridge is implicated in subunit movement. Contacts the P site tRNA; the 5S rRNA and some of its associated proteins might help stabilize positioning of ribosome-bound tRNAs. The chain is Large ribosomal subunit protein uL5 from Pseudomonas entomophila (strain L48).